The primary structure comprises 216 residues: Cytidylate kinase (216 aa).

Gly-7 to Thr-15 provides a ligand contact to ATP.

It belongs to the cytidylate kinase family. Type 1 subfamily.

The protein resides in the cytoplasm. It catalyses the reaction CMP + ATP = CDP + ADP. The enzyme catalyses dCMP + ATP = dCDP + ADP. In Chlamydia trachomatis serovar D (strain ATCC VR-885 / DSM 19411 / UW-3/Cx), this protein is Cytidylate kinase.